The chain runs to 466 residues: Ribulose bisphosphate carboxylase large chain (466 aa).

The residue at position 4 (Lys4) is an N6,N6,N6-trimethyllysine. Residues Asn113 and Thr163 each contribute to the substrate site. The active-site Proton acceptor is the Lys165. Lys167 serves as a coordination point for substrate. Positions 191, 193, and 194 each coordinate Mg(2+). Position 191 is an N6-carboxylysine (Lys191). The active-site Proton acceptor is His284. Positions 285, 317, and 369 each coordinate substrate.

Belongs to the RuBisCO large chain family. Type I subfamily. Heterohexadecamer of 8 large chains and 8 small chains; disulfide-linked. The disulfide link is formed within the large subunit homodimers. Mg(2+) is required as a cofactor. In terms of processing, the disulfide bond which can form in the large chain dimeric partners within the hexadecamer appears to be associated with oxidative stress and protein turnover.

The protein localises to the plastid. It is found in the chloroplast. The enzyme catalyses 2 (2R)-3-phosphoglycerate + 2 H(+) = D-ribulose 1,5-bisphosphate + CO2 + H2O. It catalyses the reaction D-ribulose 1,5-bisphosphate + O2 = 2-phosphoglycolate + (2R)-3-phosphoglycerate + 2 H(+). In terms of biological role, ruBisCO catalyzes two reactions: the carboxylation of D-ribulose 1,5-bisphosphate, the primary event in carbon dioxide fixation, as well as the oxidative fragmentation of the pentose substrate in the photorespiration process. Both reactions occur simultaneously and in competition at the same active site. The sequence is that of Ribulose bisphosphate carboxylase large chain from Pinguicula caerulea (Blueflower butterwort).